We begin with the raw amino-acid sequence, 319 residues long: Ubiquinone biosynthesis protein COQ9, mitochondrial (319 aa).

The transit peptide at 1–45 (MAATVAFSGVLRRAGWRLLQLRCLPVPRCRPALAPRAFRASAMQL) directs the protein to the mitochondrion. Positions 17 to 32 (RLLQLRCLPVPRCRPA) match the SIFI-degron motif. The disordered stretch occupies residues 46 to 99 (RSLDQQKDQPPPSSSQQQSEAQGAEEPNPEALRSPPRYTDQGGEEEEDYESEEQ). Over residues 87–98 (GGEEEEDYESEE) the composition is skewed to acidic residues. The residue at position 176 (lysine 176) is an N6-acetyllysine. Arginine 245 contacts a 1,2-diacylglycero-3-phosphoethanolamine.

Belongs to the COQ9 family. In terms of assembly, homodimer. Heterodimer; two heterodimers of COQ7:COQ9 come together on the same side of the lipid pseudo-bilayer and form a curved tetramer with a hydrophobic surface suitable for membrane interaction. These two tetramers assemble into a soluble octamer with a pseudo-bilayer of lipids captured within. Interacts with COQ7; this interaction allows ubiquinone (CoQ) isoprene intermediates presentation to COQ7 and facilitates the COQ7-mediated hydroxylase step. In response to mitochondrial stress, the precursor protein is ubiquitinated by the SIFI complex in the cytoplasm before mitochondrial import, leading to its degradation. Within the SIFI complex, UBR4 initiates ubiquitin chain that are further elongated or branched by KCMF1.

Its subcellular location is the mitochondrion. It participates in cofactor biosynthesis; ubiquinone biosynthesis. In terms of biological role, membrane-associated protein that warps the membrane surface to access and bind aromatic isoprenes with high specificity, including ubiquinone (CoQ) isoprene intermediates and presents them directly to COQ7, therefore facilitating the COQ7-mediated hydroxylase step. Participates in the biosynthesis of coenzyme Q, also named ubiquinone, an essential lipid-soluble electron transporter for aerobic cellular respiration. This is Ubiquinone biosynthesis protein COQ9, mitochondrial from Bos taurus (Bovine).